Here is a 366-residue protein sequence, read N- to C-terminus: uncharacterized protein (366 aa).

One can recognise an OBG-type G domain in the interval 64–289 (GTVGFIGFPS…LKETMWDYLN (226 aa)). Residues 70–77 (GFPSVGKS), 116–120 (DLPGI), and 247–250 (NKID) each bind GTP. Residues 289 to 365 (NLVRVYTRPR…LDEDVVTIVK (77 aa)) enclose the TGS domain.

The protein belongs to the TRAFAC class OBG-HflX-like GTPase superfamily. OBG GTPase family.

This is an uncharacterized protein from Schizosaccharomyces pombe (strain 972 / ATCC 24843) (Fission yeast).